Consider the following 226-residue polypeptide: Phosphoribosylformylglycinamidine synthase subunit PurQ (226 aa).

The Glutamine amidotransferase type-1 domain maps to K2 to G226. C86 serves as the catalytic Nucleophile. Active-site residues include H195 and E197.

As to quaternary structure, part of the FGAM synthase complex composed of 1 PurL, 1 PurQ and 2 PurS subunits.

The protein resides in the cytoplasm. The enzyme catalyses N(2)-formyl-N(1)-(5-phospho-beta-D-ribosyl)glycinamide + L-glutamine + ATP + H2O = 2-formamido-N(1)-(5-O-phospho-beta-D-ribosyl)acetamidine + L-glutamate + ADP + phosphate + H(+). It catalyses the reaction L-glutamine + H2O = L-glutamate + NH4(+). It participates in purine metabolism; IMP biosynthesis via de novo pathway; 5-amino-1-(5-phospho-D-ribosyl)imidazole from N(2)-formyl-N(1)-(5-phospho-D-ribosyl)glycinamide: step 1/2. Its function is as follows. Part of the phosphoribosylformylglycinamidine synthase complex involved in the purines biosynthetic pathway. Catalyzes the ATP-dependent conversion of formylglycinamide ribonucleotide (FGAR) and glutamine to yield formylglycinamidine ribonucleotide (FGAM) and glutamate. The FGAM synthase complex is composed of three subunits. PurQ produces an ammonia molecule by converting glutamine to glutamate. PurL transfers the ammonia molecule to FGAR to form FGAM in an ATP-dependent manner. PurS interacts with PurQ and PurL and is thought to assist in the transfer of the ammonia molecule from PurQ to PurL. The polypeptide is Phosphoribosylformylglycinamidine synthase subunit PurQ (Limosilactobacillus fermentum (strain NBRC 3956 / LMG 18251) (Lactobacillus fermentum)).